Here is a 401-residue protein sequence, read N- to C-terminus: SVP1-like protein 2 (401 aa).

WD repeat units lie at residues 222-262 (AHKN…LIHE) and 267-306 (LDRA…DKRH).

This sequence belongs to the WD repeat PROPPIN family.

It localises to the vacuole membrane. It is found in the cytoplasmic vesicle membrane. Its function is as follows. Involved in mitochondrial or peroxisomal functions and amino acid signaling pathways. This is SVP1-like protein 2 (HSV2) from Eremothecium gossypii (strain ATCC 10895 / CBS 109.51 / FGSC 9923 / NRRL Y-1056) (Yeast).